Consider the following 456-residue polypeptide: Zinc finger C2HC domain-containing protein 1C (456 aa).

Disordered stretches follow at residues 16–46 and 85–113; these read MLPHNTTEAPGPHSAKQDSYEQGDSSQQSLK and YPHCTGISQQDPESDSQGQGNGLFYSSGP. Composition is skewed to polar residues over residues 35–46 and 90–102; these read YEQGDSSQQSLK and GISQQDPESDSQG. The stretch at 211-265 forms a coiled coil; that stretch reads VQIRRLEAAGESLEEEIRRKQILLRGKLKKTEEELRRIQTQKEQAKENENGELQK. Residues 336–388 are disordered; that stretch reads NKIRDPVSEPSVEKFSPPSETPVGALQGSARNSSLSMAPDSSGSSGSIEEPQL. A compositionally biased stretch (low complexity) spans 368–382; sequence SSLSMAPDSSGSSGS. Residues 387-416 form a C2HC/C3H-type zinc finger; sequence QLGECSHCGRKFLSFRLERHSNICSRMRGS. Positions 391, 394, 406, and 410 each coordinate Zn(2+).

The protein belongs to the ZC2HC1 family. Zn(2+) serves as cofactor.

This Homo sapiens (Human) protein is Zinc finger C2HC domain-containing protein 1C (ZC2HC1C).